The following is a 543-amino-acid chain: Protein pbn1 (543 aa).

Residues methionine 1–glutamate 503 lie on the Lumenal side of the membrane. N-linked (GlcNAc...) asparagine glycosylation occurs at asparagine 409. The chain crosses the membrane as a helical span at residues leucine 504–isoleucine 524. The Cytoplasmic segment spans residues alanine 525–glutamate 543.

This sequence belongs to the PIGX family.

Its subcellular location is the endoplasmic reticulum membrane. It participates in glycolipid biosynthesis; glycosylphosphatidylinositol-anchor biosynthesis. Functionally, required for proper folding and/or the stability of a subset of proteins in the endoplasmic reticulum. Component of glycosylphosphatidylinositol-mannosyltransferase 1 which transfers the first of the 4 mannoses in the GPI-anchor precursors during GPI-anchor biosynthesis. Probably acts by stabilizing the mannosyltransferase gpi14. This Aspergillus oryzae (strain ATCC 42149 / RIB 40) (Yellow koji mold) protein is Protein pbn1 (pbn1).